We begin with the raw amino-acid sequence, 362 residues long: 3-dehydroquinate synthase (362 aa).

Residues 73–78 (DAEAGK), 107–111 (GAATD), 131–132 (TT), K144, K153, and 171–174 (TLQT) each bind NAD(+). E186, H249, and H265 together coordinate Zn(2+).

It belongs to the sugar phosphate cyclases superfamily. Dehydroquinate synthase family. NAD(+) is required as a cofactor. The cofactor is Co(2+). Zn(2+) serves as cofactor.

It is found in the cytoplasm. It carries out the reaction 7-phospho-2-dehydro-3-deoxy-D-arabino-heptonate = 3-dehydroquinate + phosphate. Its pathway is metabolic intermediate biosynthesis; chorismate biosynthesis; chorismate from D-erythrose 4-phosphate and phosphoenolpyruvate: step 2/7. Catalyzes the conversion of 3-deoxy-D-arabino-heptulosonate 7-phosphate (DAHP) to dehydroquinate (DHQ). This Mycobacterium bovis (strain ATCC BAA-935 / AF2122/97) protein is 3-dehydroquinate synthase.